The primary structure comprises 107 residues: Phosphoribosyl-ATP pyrophosphatase (107 aa).

The protein belongs to the PRA-PH family.

Its subcellular location is the cytoplasm. The catalysed reaction is 1-(5-phospho-beta-D-ribosyl)-ATP + H2O = 1-(5-phospho-beta-D-ribosyl)-5'-AMP + diphosphate + H(+). Its pathway is amino-acid biosynthesis; L-histidine biosynthesis; L-histidine from 5-phospho-alpha-D-ribose 1-diphosphate: step 2/9. In Rhizobium meliloti (strain 1021) (Ensifer meliloti), this protein is Phosphoribosyl-ATP pyrophosphatase (hisE).